The primary structure comprises 222 residues: Transmembrane reductase CYB561D2 (222 aa).

Topologically, residues 2 to 17 (ALSVETESHIYRALRT) are cytoplasmic. In terms of domain architecture, Cytochrome b561 spans 14–217 (ALRTVSGAAA…NQVSNAYLYR (204 aa)). Residues 18-38 (VSGAAAHLVALGFTIFVAVLA) traverse the membrane as a helical segment. The Lumenal portion of the chain corresponds to 39–46 (RPGSSLFS). Residues 47 to 67 (WHPVLMSLAFSFLMTEALLVF) form a helical membrane-spanning segment. H48 lines the heme b pocket. Residues 68-85 (SPESSLLRSLSRKGRARC) lie on the Cytoplasmic side of the membrane. The heme b site is built by H86 and H120. Residues 86–106 (HWVLQLLALLCALLGLGLVIL) traverse the membrane as a helical segment. At 107–122 (HKEQLGKAHLATWHGR) the chain is on the lumenal side. Residues 123–143 (AGLLAVLWAGLQCSGGVGLLY) form a helical membrane-spanning segment. Topologically, residues 144–162 (PKLLPRWPLAKLKLYHATS) are cytoplasmic. H159 is a heme b binding site. The helical transmembrane segment at 163–183 (GLVGYLLGGASLLLGMCSLWF) threads the bilayer. Topologically, residues 184 to 186 (TAT) are lumenal. Residues 187–207 (VTGGVWYLAVLCPVITSLVIM) traverse the membrane as a helical segment. Topologically, residues 208–222 (NQVSNAYLYRKRIQP) are cytoplasmic.

The cofactor is heme b.

It localises to the endoplasmic reticulum membrane. The protein localises to the cytoplasmic vesicle membrane. The enzyme catalyses monodehydro-L-ascorbate radical(out) + L-ascorbate(in) = monodehydro-L-ascorbate radical(in) + L-ascorbate(out). It carries out the reaction Fe(3+)(out) + L-ascorbate(in) = monodehydro-L-ascorbate radical(in) + Fe(2+)(out) + H(+). In terms of biological role, transmembrane reductase that may use ascorbate as an electron donor in the cytoplasm and transfer electrons across endoplasmic reticulum membranes to reduce monodehydro-L-ascorbate radical and iron cations Fe(3+) in the lumen of that compartment. The chain is Transmembrane reductase CYB561D2 from Bos taurus (Bovine).